The primary structure comprises 124 residues: Small ribosomal subunit protein uS11 (124 aa).

Belongs to the universal ribosomal protein uS11 family. As to quaternary structure, part of the 30S ribosomal subunit.

Functionally, located on the platform of the 30S subunit. The chain is Small ribosomal subunit protein uS11 from Methanococcus aeolicus (strain ATCC BAA-1280 / DSM 17508 / OCM 812 / Nankai-3).